A 187-amino-acid polypeptide reads, in one-letter code: Ethylene-responsive transcription factor ERF015 (187 aa).

Positions 26 to 83 (CYRGVRKRSWGKWVSEIRVPKTGRRIWLGSYDAPEKAARAYDAALFCIRGEKGVYNFP) form a DNA-binding region, AP2/ERF.

This sequence belongs to the AP2/ERF transcription factor family. ERF subfamily.

The protein localises to the nucleus. Probably acts as a transcriptional activator. Binds to the GCC-box pathogenesis-related promoter element. May be involved in the regulation of gene expression by stress factors and by components of stress signal transduction pathways. In Arabidopsis thaliana (Mouse-ear cress), this protein is Ethylene-responsive transcription factor ERF015 (ERF015).